We begin with the raw amino-acid sequence, 1391 residues long: MASVTSIDVDATQHLRDILKLDRTEDSINGNQRKSNSSFSSDLNGLLVTDQVAAVGTSLSDTNLCSAAVLNSERQVICLSGDDSSSCIKITGKDVEIVASHDSNICSKARGSNKVKIQPVAKYDWEQKYYCGNLIAVSNDYIAYATRGANGSAMVRVLSLTTAERILLKGITGSVTDLAFAHLKSNHLACLDEAGSLFVWQLTMTNGKIQDDIVVHIRRPENTVLSIFRRIIWCPYIPEENEENVVDDTSQTIALLHEDKAEVWDLEIIQTNHNTWPVDVSEIKEGFIIVKGHSGRLSEGALSPDGTVLATASHDGYVKFWQIYIEGQDQPRCLHEWKPHNGRPLSCLLFCDNHKKQDPEVPFWRFLITGADQNRELKVWCTVSWTSLQTIQFSPDPFSSGVLPGLKASLDLSAEFLILTDVQRKVLYVMELNQNQDEGKATFTSISEFLLTHPVLSFGIQDVNHCRLRNTEVLPAEEDNNSINQEEILECESVEAAAGVLIKLFCVHTKALQDVQIWFQPHQNAEPAILGTAQPQQENFALPDIQGINMERMPSMQGSMHGSQSDLCRISTDFLLLPTDSVPKLMTPDAFMSPSASLQQGITSPGSIISTLTTVTPISSTSNSDTVLARPSEEMTLSTMLQLDTSATLSNPSRDGNPLSNSRNPAVVIPGMSETIVSIPAAQMPSSNHPLELQDLDPLVVPQASPTRERSPDVISSASTAMPQDIPEIASETLQRSYISSVPSGLSVEGCESSHHSDSMSSAASALHLLSPHNLSSLDHGHRPIIIGSSVVENERISAPSLLESTIQEDNVDIGLPQPWPAAPDITKETRNNLVDSSRNGQDRGDSSFHRHNYHLLQQHDSQDASAEQSDHDDEVASLASISGSFGGKGQHLLIKDWKSKLSPRSSPKLRRKSKKDEMELAKSPRVSDHLVNLELQEELLCMLRSQQKELSDLRQNQLELMKKLTDHMDAVQSSIMGHVERVIDTQQEQEQRRVERILSDGHERNGQLQEYLSQQLSHSLSGSLSNRVDKIIREEMKKTVSQCISKTLDPVAAQLTSSVAAKVTAVEGVLKENVTKMVKSKNVTDAIGRVAADSLQTVIHSAYREAFQSIVLPAFERSCQSMFQQVNNSFKQGTQDYMQQLEAHLRSIKMNEQETRDPVVTQLQQMVDSLQTVTDQLASNITSNVRSEVQHQLHIAVGNMQDSILSQVQRIIKEEVSHAMKEQQAAVTSSIMQAMRSAAGTPIPSSHMDFHSQQTHILQLMQQGQINQAFQQALTASDLNLILYVCETVDPQQVFGQHPCPLTQPVLLSLIQQLSFDFGSRTEIKLNYLEEAVMNLDHSDPVTRDHMGTVLNQVRQKLYQFLQAEPQNALQKPARRLLIMLQGLVPPTLS.

4 WD repeats span residues 170-210 (GITG…GKIQ), 226-274 (SIFR…TNHN), 292-331 (GHSGRLSEGALSPDGTVLATASHDGYVKFWQIYIEGQDQP), and 340-390 (HNGR…SLQT). 2 disordered regions span residues 703–724 (QASPTRERSPDVISSASTAMPQ) and 897–924 (DWKSKLSPRSSPKLRRKSKKDEMELAKS). Over residues 915–924 (KKDEMELAKS) the composition is skewed to basic and acidic residues. Positions 935–968 (ELQEELLCMLRSQQKELSDLRQNQLELMKKLTDH) form a coiled coil.

It belongs to the WD repeat EDC4 family.

Its subcellular location is the cytoplasm. The protein resides in the P-body. It localises to the nucleus. Functionally, in the process of mRNA degradation, seems to play a role in mRNA decapping. The chain is Enhancer of mRNA-decapping protein 4 (edc4) from Xenopus laevis (African clawed frog).